The following is a 212-amino-acid chain: NAD(P)H-hydrate epimerase (212 aa).

A YjeF N-terminal domain is found at 11-212 (MRHYDSYTIN…ANDMGTYAVD (202 aa)). Position 60-64 (60-64 (NNGGD)) interacts with (6S)-NADPHX. N61 and D123 together coordinate K(+). Residues 127-133 (GIGIDRA), Y138, and D156 contribute to the (6S)-NADPHX site. S159 contacts K(+).

Belongs to the NnrE/AIBP family. K(+) is required as a cofactor.

It carries out the reaction (6R)-NADHX = (6S)-NADHX. The enzyme catalyses (6R)-NADPHX = (6S)-NADPHX. Its function is as follows. Catalyzes the epimerization of the S- and R-forms of NAD(P)HX, a damaged form of NAD(P)H that is a result of enzymatic or heat-dependent hydration. This is a prerequisite for the S-specific NAD(P)H-hydrate dehydratase to allow the repair of both epimers of NAD(P)HX. The polypeptide is NAD(P)H-hydrate epimerase (Limosilactobacillus reuteri (strain ATCC 55730 / SD2112) (Lactobacillus reuteri)).